The primary structure comprises 174 residues: UPF0398 protein YfdB (174 aa).

This sequence belongs to the UPF0398 family.

This is UPF0398 protein YfdB (yfdB) from Lactococcus lactis subsp. lactis (strain IL1403) (Streptococcus lactis).